The following is a 171-amino-acid chain: Inosine/xanthosine triphosphatase (171 aa).

8 to 13 (TTNPAK) contributes to the substrate binding site. Glutamate 38 is a binding site for Mg(2+).

It belongs to the YjjX NTPase family. In terms of assembly, homodimer. Mg(2+) is required as a cofactor. Requires Mn(2+) as cofactor.

It catalyses the reaction XTP + H2O = XDP + phosphate + H(+). It carries out the reaction ITP + H2O = IDP + phosphate + H(+). Phosphatase that hydrolyzes non-canonical purine nucleotides such as XTP and ITP to their respective diphosphate derivatives. Probably excludes non-canonical purines from DNA/RNA precursor pool, thus preventing their incorporation into DNA/RNA and avoiding chromosomal lesions. The chain is Inosine/xanthosine triphosphatase from Klebsiella pneumoniae (strain 342).